The chain runs to 289 residues: Digeranylgeranylglyceryl phosphate synthase (289 aa).

8 helical membrane-spanning segments follow: residues 17–37 (CLMAGFAAIIGTLIAFNILTS), 50–70 (LFSSVLIFLAVFLVAGAGNAI), 106–126 (FALGTLLAFSINPICGVIALF), 141–161 (TPLLGNLSIGYLTGSSFLFGA), 163–183 (VFGLEGLKALFVLFLLAALAI), 221–241 (LIGFLAVIFSPLPYHLSMLGL), 243–263 (YLYLVLLADLGFLAAIYQLLA), and 269–289 (KSSKMFKIAMFFALIAFIAGV).

Belongs to the UbiA prenyltransferase family. DGGGP synthase subfamily. The cofactor is Mg(2+).

It is found in the cell membrane. The enzyme catalyses sn-3-O-(geranylgeranyl)glycerol 1-phosphate + (2E,6E,10E)-geranylgeranyl diphosphate = 2,3-bis-O-(geranylgeranyl)-sn-glycerol 1-phosphate + diphosphate. Its pathway is membrane lipid metabolism; glycerophospholipid metabolism. In terms of biological role, prenyltransferase that catalyzes the transfer of the geranylgeranyl moiety of geranylgeranyl diphosphate (GGPP) to the C2 hydroxyl of (S)-3-O-geranylgeranylglyceryl phosphate (GGGP). This reaction is the second ether-bond-formation step in the biosynthesis of archaeal membrane lipids. This is Digeranylgeranylglyceryl phosphate synthase from Methanosarcina barkeri (strain Fusaro / DSM 804).